A 409-amino-acid chain; its full sequence is Tyrosine--tRNA ligase (409 aa).

The 'HIGH' region signature appears at 54-63; the sequence is PTAPDIHLGH. Residues 238-242 carry the 'KMSKS' region motif; the sequence is KMSKS. Lys-241 is an ATP binding site. The region spanning 347-407 is the S4 RNA-binding domain; sequence MGILHVLRAS…GKRKFARVNL (61 aa).

Belongs to the class-I aminoacyl-tRNA synthetase family. TyrS type 2 subfamily. In terms of assembly, homodimer.

The protein localises to the cytoplasm. It carries out the reaction tRNA(Tyr) + L-tyrosine + ATP = L-tyrosyl-tRNA(Tyr) + AMP + diphosphate + H(+). In terms of biological role, catalyzes the attachment of tyrosine to tRNA(Tyr) in a two-step reaction: tyrosine is first activated by ATP to form Tyr-AMP and then transferred to the acceptor end of tRNA(Tyr). The polypeptide is Tyrosine--tRNA ligase (Bordetella avium (strain 197N)).